Consider the following 53-residue polypeptide: Large ribosomal subunit protein bL32 (53 aa).

Positions 1–20 are enriched in basic residues; sequence MAVPKRRVSHTRAAKRRTHY. Positions 1–53 are disordered; the sequence is MAVPKRRVSHTRAAKRRTHYKLTLPMPVKDADGTWRMPHHMNMTTGEYKTTKA. Polar residues predominate over residues 42–53; the sequence is NMTTGEYKTTKA.

The protein belongs to the bacterial ribosomal protein bL32 family.

The sequence is that of Large ribosomal subunit protein bL32 from Sulfurovum sp. (strain NBC37-1).